Reading from the N-terminus, the 553-residue chain is Keratin, type II cytoskeletal 6A (553 aa).

Positions 1–20 are enriched in polar residues; sequence MSTKTTIKSQTSHRGYSASS. A disordered region spans residues 1–21; that stretch reads MSTKTTIKSQTSHRGYSASSA. A head region spans residues 1 to 151; the sequence is MSTKTTIKSQ…DPTIQRVRTE (151 aa). Residues 152-187 form a coil 1A region; that stretch reads EREQIKTLNNKFASFIDKVRFLEQQNKVLDTKWALL. The IF rod domain occupies 152 to 465; the sequence is EREQIKTLNN…KLLEGEECRL (314 aa). The linker 1 stretch occupies residues 188-206; sequence QEQGTKTVRQNLEPMFEQY. Residues 207-298 form a coil 1B region; it reads ISNLRRQLDS…ALYEAELSQM (92 aa). Residues 299–322 are linker 12; it reads QTHISDTSVVLSMDNNRSLDLDSI. The tract at residues 323 to 461 is coil 2; that stretch reads IAEVKAQYED…ATYRKLLEGE (139 aa). The interval 462–553 is tail; the sequence is ECRLNGEGVG…TSSSKKSYRQ (92 aa). The segment at 528 to 553 is disordered; sequence LSSSGGLSSSTIKYTTTSSSKKSYRQ. Residues 531–553 show a composition bias toward low complexity; the sequence is SGGLSSSTIKYTTTSSSKKSYRQ.

It belongs to the intermediate filament family. As to quaternary structure, heterodimer of a type I and a type II keratin. KRT6 isomers associate with KRT16 and/or KRT17. Interacts with TCHP. As to expression, predominates in the adult trunk skin, tongue, trachea/esophagus and eye. In adult skin, localization is restricted to hair follicles, where it is localized predominantly in the outer root sheath.

Its function is as follows. Epidermis-specific type I keratin involved in wound healing. Involved in the activation of follicular keratinocytes after wounding, while it does not play a major role in keratinocyte proliferation or migration. Participates in the regulation of epithelial migration by inhibiting the activity of SRC during wound repair. The chain is Keratin, type II cytoskeletal 6A (Krt6a) from Mus musculus (Mouse).